The following is a 466-amino-acid chain: 3-isopropylmalate dehydratase large subunit (466 aa).

Residues C347, C407, and C410 each coordinate [4Fe-4S] cluster.

It belongs to the aconitase/IPM isomerase family. LeuC type 1 subfamily. Heterodimer of LeuC and LeuD. It depends on [4Fe-4S] cluster as a cofactor.

The catalysed reaction is (2R,3S)-3-isopropylmalate = (2S)-2-isopropylmalate. The protein operates within amino-acid biosynthesis; L-leucine biosynthesis; L-leucine from 3-methyl-2-oxobutanoate: step 2/4. In terms of biological role, catalyzes the isomerization between 2-isopropylmalate and 3-isopropylmalate, via the formation of 2-isopropylmaleate. The sequence is that of 3-isopropylmalate dehydratase large subunit from Buchnera aphidicola subsp. Thelaxes suberi.